Reading from the N-terminus, the 291-residue chain is 4-hydroxy-tetrahydrodipicolinate synthase (291 aa).

A pyruvate-binding site is contributed by threonine 47. Tyrosine 134 acts as the Proton donor/acceptor in catalysis. Lysine 162 functions as the Schiff-base intermediate with substrate in the catalytic mechanism. Isoleucine 205 serves as a coordination point for pyruvate.

The protein belongs to the DapA family. As to quaternary structure, homotetramer; dimer of dimers.

Its subcellular location is the cytoplasm. It catalyses the reaction L-aspartate 4-semialdehyde + pyruvate = (2S,4S)-4-hydroxy-2,3,4,5-tetrahydrodipicolinate + H2O + H(+). Its pathway is amino-acid biosynthesis; L-lysine biosynthesis via DAP pathway; (S)-tetrahydrodipicolinate from L-aspartate: step 3/4. Catalyzes the condensation of (S)-aspartate-beta-semialdehyde [(S)-ASA] and pyruvate to 4-hydroxy-tetrahydrodipicolinate (HTPA). The sequence is that of 4-hydroxy-tetrahydrodipicolinate synthase from Methanosphaerula palustris (strain ATCC BAA-1556 / DSM 19958 / E1-9c).